We begin with the raw amino-acid sequence, 322 residues long: Ferrochelatase (322 aa).

His194 and Glu275 together coordinate Fe cation.

The protein belongs to the ferrochelatase family.

It is found in the cytoplasm. It carries out the reaction heme b + 2 H(+) = protoporphyrin IX + Fe(2+). Its pathway is porphyrin-containing compound metabolism; protoheme biosynthesis; protoheme from protoporphyrin-IX: step 1/1. In terms of biological role, catalyzes the ferrous insertion into protoporphyrin IX. This Yersinia enterocolitica protein is Ferrochelatase.